The following is a 425-amino-acid chain: Diacetylchitobiose binding protein DasA (425 aa).

The signal sequence occupies residues 1 to 20 (MKRKLIAAIGIAGMMVSIAA). Cys21 carries the N-palmitoyl cysteine lipid modification. Cys21 carries the S-diacylglycerol cysteine lipid modification.

This sequence belongs to the bacterial solute-binding protein 1 family. As to quaternary structure, the complex is composed of two ATP-binding proteins (MsiK), two transmembrane proteins (DasB and DasC) and a solute-binding protein (DasA).

It is found in the cell membrane. Part of the ABC transporter complex DasABC-MsiK involved in N,N'-diacetylchitobiose ((GlcNAc)2) uptake. Binds specifically to (GlcNAc)2. Can also bind to GlcNAc, (GlcNAc)3, (GlcNAc)4 and (GlcNAc)5, but it exhibits the highest affinity for (GlcNAc)2. Involved in the control of morphological differentiation. The chain is Diacetylchitobiose binding protein DasA from Streptomyces coelicolor (strain ATCC BAA-471 / A3(2) / M145).